The primary structure comprises 511 residues: MATSVQTGKAKQLTLLGFFAITASMVMAVYEYPTFATSGFSLVFFLLLGGILWFIPVGLCAAEMATVDGWEEGGVFAWVSNTLGPRWGFAAISFGYLQIAIGFIPMLYFVLGALSYILKWPALNEDPITKTIAALIILWALALTQFGGTKYTARIAKVGFFAGILLPAFILIALAAIYLHSGAPVAIEMDSKTFFPDFSKVGTLVVFVAFILSYMGVEASATHVNEMSNPGRDYPLAMLLLMVAAICLSSVGGLSIAMVIPGNEINLSAGVMQTFTVLMSHVAPEIEWTVRVISALLLLGVLAEIASWIVGPSRGMYVTAQKNLLPAAFAKMNKNGVPVTLVISQLVITSIALIILTNTGGGNNMSFLIALALTVVIYLCAYFMLFIGYIVLVLKHPDLKRTFNIPGGKGVKLVVAIVGLLTSIMAFIVSFLPPDNIQGDSTDMYVELLVVSFLVVLALPFILYAVHDRKGKANTGVTLEPINSQNAPKGHFFLHPRARSPHYIVMNDKKH.

The Cytoplasmic segment spans residues 1–13 (MATSVQTGKAKQL). A helical transmembrane segment spans residues 14-36 (TLLGFFAITASMVMAVYEYPTFA). The Periplasmic portion of the chain corresponds to 37-40 (TSGF). Residues 41-64 (SLVFFLLLGGILWFIPVGLCAAEM) form a helical membrane-spanning segment. The Cytoplasmic segment spans residues 65 to 85 (ATVDGWEEGGVFAWVSNTLGP). Residues 86 to 112 (RWGFAAISFGYLQIAIGFIPMLYFVLG) traverse the membrane as a helical segment. Residues 113-126 (ALSYILKWPALNED) are Periplasmic-facing. Residues 127-147 (PITKTIAALIILWALALTQFG) form a helical membrane-spanning segment. Topologically, residues 148–151 (GTKY) are cytoplasmic. A helical membrane pass occupies residues 152 to 180 (TARIAKVGFFAGILLPAFILIALAAIYLH). At 181-201 (SGAPVAIEMDSKTFFPDFSKV) the chain is on the periplasmic side. The chain crosses the membrane as a helical span at residues 202–225 (GTLVVFVAFILSYMGVEASATHVN). At 226 to 229 (EMSN) the chain is on the cytoplasmic side. Residues 230 to 259 (PGRDYPLAMLLLMVAAICLSSVGGLSIAMV) form a helical membrane-spanning segment. The Periplasmic segment spans residues 260-288 (IPGNEINLSAGVMQTFTVLMSHVAPEIEW). Residues 289–322 (TVRVISALLLLGVLAEIASWIVGPSRGMYVTAQK) traverse the membrane as a helical segment. Residues 323 to 337 (NLLPAAFAKMNKNGV) lie on the Cytoplasmic side of the membrane. Residues 338-359 (PVTLVISQLVITSIALIILTNT) traverse the membrane as a helical segment. Over 360 to 362 (GGG) the chain is Periplasmic. The helical transmembrane segment at 363–396 (NNMSFLIALALTVVIYLCAYFMLFIGYIVLVLKH) threads the bilayer. Over 397-409 (PDLKRTFNIPGGK) the chain is Cytoplasmic. Residues 410–430 (GVKLVVAIVGLLTSIMAFIVS) traverse the membrane as a helical segment. The Periplasmic portion of the chain corresponds to 431 to 443 (FLPPDNIQGDSTD). The chain crosses the membrane as a helical span at residues 444-467 (MYVELLVVSFLVVLALPFILYAVH). Over 468-511 (DRKGKANTGVTLEPINSQNAPKGHFFLHPRARSPHYIVMNDKKH) the chain is Cytoplasmic.

This sequence belongs to the amino acid-polyamine-organocation (APC) superfamily. Glutamate:GABA antiporter (GGA) (TC 2.A.3.7) family. As to quaternary structure, monomer.

Its subcellular location is the cell inner membrane. The enzyme catalyses 4-aminobutanoate(in) + L-glutamate(out) = 4-aminobutanoate(out) + L-glutamate(in). Its activity is regulated as follows. Shows pH-dependent activity. The Glu/GABA transport activity is robust at pH 4.5 and rapidly decreases with increasing pH, with no detectable activity at pH 6.5 or above. The Glu analog L-trans-pyrrolidine-2,4-dicarboxylic acid (L-PDC) blocks the uptake of glutamate by selective inhibition. Functionally, involved in glutaminase-dependent acid resistance. Exchanges extracellular glutamate (Glu) for intracellular gamma-aminobutyric acid (GABA) under acidic conditions. The protonation states of substrates are crucial for transport. Selectively transports Glu with no net charge and GABA with a positive charge. Also efficiently transports glutamine and, to a smaller extent, methionine and leucine. When the extracellular pH drops below 2.5, can import L-glutamine and export either glutamate or GABA. The ability to survive the extremely acidic conditions of the stomach is essential for successful colonization of the host by commensal and pathogenic bacteria. The polypeptide is Glutamate/gamma-aminobutyrate antiporter (Escherichia coli (strain K12)).